An 833-amino-acid polypeptide reads, in one-letter code: Capsid-associated protein Vp91 (833 aa).

The signal sequence occupies residues 1–18 (MSGVVLLVLAIILITIFS). N-linked (GlcNAc...) asparagine; by host glycosylation is found at Asn137, Asn180, Asn199, and Asn210. The C2HC BV-type zinc-finger motif lies at 147-196 (CVPEDPCSGRPPGRYPMNELLLDTLVHNQHSDKNYSAGAHLYHPTLYLRC). Disulfide bonds link Cys207–Cys220 and Cys260–Cys273. Residues 223-281 (NELCEGRPDGFVLPYFPEALLVNEFVECRNGEHVVAQCADGQVFDRALMTCVHAHPCAF) form the Chitin-binding type-2 domain. Asn408, Asn413, Asn588, and Asn609 each carry an N-linked (GlcNAc...) asparagine; by host glycan. Residues 647–673 (EPGGDGDHWAPEVPPTQPEPELEPESE) form a disordered region.

The protein resides in the virion. Functionally, probable capsid-associated protein. This is Capsid-associated protein Vp91 from Choristoneura fumiferana nuclear polyhedrosis virus (CfMNPV).